Here is a 362-residue protein sequence, read N- to C-terminus: 3-isopropylmalate dehydrogenase (362 aa).

75 to 88 (GPKWANLPPTEQPE) contributes to the NAD(+) binding site. Positions 96, 106, 135, and 224 each coordinate substrate. Residues Asp224, Asp248, and Asp252 each contribute to the Mg(2+) site. 282–294 (GSAPDIAGLGVAN) is a binding site for NAD(+).

This sequence belongs to the isocitrate and isopropylmalate dehydrogenases family. LeuB type 1 subfamily. Homodimer. It depends on Mg(2+) as a cofactor. Requires Mn(2+) as cofactor.

The protein localises to the cytoplasm. It carries out the reaction (2R,3S)-3-isopropylmalate + NAD(+) = 4-methyl-2-oxopentanoate + CO2 + NADH. Its pathway is amino-acid biosynthesis; L-leucine biosynthesis; L-leucine from 3-methyl-2-oxobutanoate: step 3/4. Its function is as follows. Catalyzes the oxidation of 3-carboxy-2-hydroxy-4-methylpentanoate (3-isopropylmalate) to 3-carboxy-4-methyl-2-oxopentanoate. The product decarboxylates to 4-methyl-2 oxopentanoate. This is 3-isopropylmalate dehydrogenase from Colwellia psychrerythraea (strain 34H / ATCC BAA-681) (Vibrio psychroerythus).